A 348-amino-acid chain; its full sequence is Dihydroorotase (348 aa).

Zn(2+) is bound by residues His-17 and His-19. Residues 19 to 21 (HLR) and Asn-45 contribute to the substrate site. Lys-103, His-140, and His-178 together coordinate Zn(2+). Lys-103 is modified (N6-carboxylysine). Position 140 (His-140) interacts with substrate. Residue Leu-223 coordinates substrate. Asp-251 provides a ligand contact to Zn(2+). Asp-251 is an active-site residue. Positions 255 and 267 each coordinate substrate.

It belongs to the metallo-dependent hydrolases superfamily. DHOase family. Class II DHOase subfamily. As to quaternary structure, homodimer. Requires Zn(2+) as cofactor.

The enzyme catalyses (S)-dihydroorotate + H2O = N-carbamoyl-L-aspartate + H(+). The protein operates within pyrimidine metabolism; UMP biosynthesis via de novo pathway; (S)-dihydroorotate from bicarbonate: step 3/3. Catalyzes the reversible cyclization of carbamoyl aspartate to dihydroorotate. The sequence is that of Dihydroorotase from Klebsiella pneumoniae (strain 342).